Consider the following 93-residue polypeptide: Small ribosomal subunit protein uS19 (93 aa).

It belongs to the universal ribosomal protein uS19 family.

Its function is as follows. Protein S19 forms a complex with S13 that binds strongly to the 16S ribosomal RNA. The chain is Small ribosomal subunit protein uS19 from Campylobacter hominis (strain ATCC BAA-381 / DSM 21671 / CCUG 45161 / LMG 19568 / NCTC 13146 / CH001A).